The chain runs to 750 residues: MALPFLPGNSFNRNIGKERFHKSQHWGFCNNVRMLVSENKPGVGGDLLYGQKIKPKHSVFPKGDGTDAPSWVAFDKQVLSFDAYLEDEISDKRQEIFRIRYYKIYFYLEDDTIQVNEPEVINSGLPQGTSIRRQRIPYPPPNDDQFYTVYDFNINISVVFYGRTFKIYDCDPFTKNFLKKIGIKLNPPGQCPLDPYMKMRRETLEFVDPFRPYQSFDTLKRFIQYDGKVLRFFCLWDDSTSLFGDRREFVLHYFLCDGTVEIREVLPSNSGRDAMSSFLRRGKLPKYGPPGIYQPGQITDRAVLNVYGGLSEWRADGYLLDKYQLGKVEQDFYTDQDLSIGATINVWGRKVLLCDCDEFTKTYYRTKYGVDNFTPISCKPPHLPKIERKYPPYTGFGSEEDSFRSCVGLKPTPHRKNFKKFMELDSFGNISNILRYFGKLITHKCADVDRIFVIAFYLSDDTISVFEPIENNSGNAGGMFLKRSRVKKPGQEVFKSEFSEYIKAEELYIGATVNINGYLFILLNADEYTLNYMENNTDKFPYSNFELAIQKLKQEKSKSREITQVFAAADYNHTKVVPYNTFRDILMSITMGKLIDQELITIARHYRVPEIMDPDLAYLIARAHEKFKKNIFENFDMFIYNCVYEDREKKGVLPTKDIRRMCKSSRLPLDDDFLDCLLSRFEDKDHQINYEIFFSVLNWRMNPTPDLQAPPYLKEKCEDVWVGMPSPIPVKYVRYLDFLIDVYGLEDNML.

3 consecutive DM10 domains span residues 75–182, 226–368, and 430–537; these read DKQV…KKIG, DGKV…RTKY, and ISNI…ENNT. Residues 557 to 592 enclose the EF-hand domain; sequence SKSREITQVFAAADYNHTKVVPYNTFRDILMSITMG.

Microtubule inner protein component of sperm flagellar doublet microtubules.

The protein resides in the cytoplasm. It is found in the cytoskeleton. It localises to the cilium axoneme. Its subcellular location is the flagellum axoneme. In terms of biological role, microtubule inner protein (MIP) part of the dynein-decorated doublet microtubules (DMTs) in cilia axoneme, which is required for motile cilia beating. The polypeptide is EF-hand domain-containing family member C2 (Efhc2) (Mus musculus (Mouse)).